Reading from the N-terminus, the 531-residue chain is Apolipoprotein N-acyltransferase (531 aa).

7 helical membrane passes run 8–28 (IILLSGASRAFVGFLAGLLAM), 34–54 (FGIFAAAFISFPMLVWLIDGV), 74–94 (WSFGFGYFLGGLWWLGNAFLV), 105–125 (LAVVGLPAVLALFYALAVLVA), 128–148 (LWSDGVGRIAALAVGFGVAEW), 178–198 (VLNVATINMLAVFVFAAPALI), and 206–226 (VGLAVAAALFAAHIGYGYYRL). Residues 243 to 493 (VQPVIDQAKK…KGVTDAILPG (251 aa)) enclose the CN hydrolase domain. Glutamate 287 functions as the Proton acceptor in the catalytic mechanism. Lysine 351 is an active-site residue. Cysteine 405 (nucleophile) is an active-site residue. A helical membrane pass occupies residues 501-521 (SMLRGRIFWFTGVFLLLVAAI).

Belongs to the CN hydrolase family. Apolipoprotein N-acyltransferase subfamily.

The protein localises to the cell inner membrane. It carries out the reaction N-terminal S-1,2-diacyl-sn-glyceryl-L-cysteinyl-[lipoprotein] + a glycerophospholipid = N-acyl-S-1,2-diacyl-sn-glyceryl-L-cysteinyl-[lipoprotein] + a 2-acyl-sn-glycero-3-phospholipid + H(+). It participates in protein modification; lipoprotein biosynthesis (N-acyl transfer). Catalyzes the phospholipid dependent N-acylation of the N-terminal cysteine of apolipoprotein, the last step in lipoprotein maturation. In Sinorhizobium fredii (strain NBRC 101917 / NGR234), this protein is Apolipoprotein N-acyltransferase.